The primary structure comprises 202 residues: CASP-like protein 2U7 (202 aa).

Residues 1–10 (MLELYEKRRA) lie on the Cytoplasmic side of the membrane. A helical transmembrane segment spans residues 11 to 31 (LLLLRLAAMFLSLAALLITVL). Over 32–64 (NREDGFFSINVFGSPQPILTKATADFTLVKGLK) the chain is Extracellular. Residues 65–85 (FFAGAMGIVAGYSFLQLAIAM) traverse the membrane as a helical segment. Residues 86 to 101 (ASMFSGAPSILGGKRM) are Cytoplasmic-facing. A helical transmembrane segment spans residues 102–122 (AWLCFVGDMTASHLCAAAAAV). Residues 123–148 (SAQLAYLGKRGAPMWSAVCTYFSHYC) are Extracellular-facing. Residues 149-169 (LVFGLAVIFAFLATLAALLVA) form a helical membrane-spanning segment. The Cytoplasmic portion of the chain corresponds to 170–202 (SISSYHLFRLHGILQQQQQQRRQLQQEHVQDKP).

This sequence belongs to the Casparian strip membrane proteins (CASP) family. As to quaternary structure, homodimer and heterodimers.

The protein resides in the cell membrane. The sequence is that of CASP-like protein 2U7 from Selaginella moellendorffii (Spikemoss).